We begin with the raw amino-acid sequence, 79 residues long: U-actitoxin-Bgr3d (79 aa).

An N-terminal signal peptide occupies residues Met-1 to Ala-21. The propeptide occupies Gln-22–Gln-38. 3 disulfide bridges follow: Cys-44–Cys-76, Cys-46–Cys-69, and Cys-59–Cys-77.

It belongs to the sea anemone type 3 (BDS) potassium channel toxin family.

It localises to the secreted. Its subcellular location is the nematocyst. Its function is as follows. Potently and selectively inhibits voltage-gated potassium channels Kv11/KCNH/ERG. Acts as a gating-modifier toxin that shifts the voltage-dependence of ERG activation in the positive direction and suppresses its current amplitudes elicited by strong depolarizing pulses that maximally activate the channels. The sequence is that of U-actitoxin-Bgr3d from Bunodosoma granuliferum (Red warty sea anemone).